A 3172-amino-acid chain; its full sequence is MSGDNGMTEEKLRRYLKRTVTELDSVTARLREVEHRAGEPIAIVGMACRFPGDVDSPESFWEFVSGGGDAIAEAPADRGWEPDPDARLGGMLAAAGDFDAGFFGISPREALAMDPQQRIMLEISWEALERAGHDPVSLRGSATGVFTGVGTVDYGPRPDEAPDEVLGYVGTGTASSVASGRVAYCLGLEGPAMTVDTACSSGLTALHLAMESLRRDECGLALAGGVTVMSSPGAFTEFRSQGGLAADGRCKPFSKAADGFGLAEGAGVLVLQRLSAARREGRPVLAVLAGSAVNQDGASNGLTAPSGPAQQRVIRRALENAGVRAGDVDYVEAHGTGTRLGDPIEVHALLSTYGAERDPDDPLWIGSVKSNIGHTQAAAGVAGVMKAVLALRHGEMPRTLHFDEPSPQIEWDLGAVSVVSQARSWPAGERPRRAGVSSFGISGTNAHVIVEEAPEADEPEPAPDSGPVPLVLSGRDEQAMRAQAGRLADHLAPEPRNSLRDTGFTLATRASAMEHRAVVVGDRDEALAGLRAVADRRIADRTATGQGPNSPRRVAMVFPGQGAQWQGMARDLLRESQVFADSIRDCERALAPHVDWSLTDLLSGARPLDRVDVVQPALFAVMVSLAALWRSHGVEPAAVVGHSQGEIAAAHVAGALTLEDAAKLVAVRSRVLRRLGGQGGMASFGLGTEQAAERIGRFAGALSIASVNGPRSVVVVAGESGPLDELIAECEAEAHKARRIPVDYASHSPQVESLREELLTELAGISPVSADVALYSTTTGQPIDTATMDTAYWYANLREQVRFQDATRQLAEAGFDAFVEVSPHPVLTVGIEATLDSALPADAGACVVGTLRRDRGGLADFHTALGEAYAQGVEVDWSPAFADARPVELPVYPFQRYWLPIPTGGRARDEDDDWRYQVVWREAEWESASLAGRVLLVTGPGVPSELSDAIRSGLEQSGATVLTCDVESRSTIGTALEAADTDALSTVGVAAVPHGEAVDPSLDALALVQALGAAGVEAPLWVLTRNAVQVADGELVDPAQAMVGGLGRVVGIEQPGRWGGLVDLVDADAASIRSLAAVLADPRGEEQVAIRADGIKVARLVPAPARARTHPLEPLAGTVLVTGGTGGIGAHLARWLARSGAEHLVLLGRRGADAPGASELREELTALGTGVTIAACDVADRARLEAVLAAEAAAEGRTVSAVMHAAGVSTSTPLDDLTEAEFTEIADVKVRGTVNLDELCPDLDAFVLFSSNAGVWGSPGLASYAAANAFLDGFARAARSEGAPVTSIAWGLWAGQNMAGDEGGEYLRSQGLRAMDPDRAVEELHITLDHGQTSVSVVDMDRRRFVELFTAARHRPLFDEIAGARAEARQSEEGPALAQRLAALLCDGREREHLAHLIRAEVAAVLGHGDDAAIDRDRAFRDLGFDSMTAVDLRNRLAAVTGVREAATVVFDHPTITRLADHYLERLVGAAEAEQAPALVREVPPKDADDPIAIVGMACRFPGGVHNPGELWEFIVGGGDAVTEMPTDRGWDLDALFDPDPQRHGTSYSRHGAFLDGAADFDAAFFGISPREALAMDPQQRQVLETTWELFENAGIDPHSVRGSDTGVFLGAAYQGYGQDAVVPEDSEGYLLTGNSSAVVSGRVAYVLGLEGPAVTVDTACSSSLVALHSACGSLRDGDCGLAVAGGVSVMAGPEVFTEFSRQGGLAVDGRCKAFSAEADGFGLPEGVAVVQLQRLSDGPAEGGRQVLGVVAGSAINQDGATNGLAAPSGVAQQRVIRKAWARAGITGADVAVVEAHGTGTRLGDPVEASALLATYGKSRGSSGPVLLGSVKSNIGHAQAAAGVAGVIKVVLGLNRGLVPPMLCRGERSPLIEWSSGGVELAEAVSPWPPAADGVRRAGVSAFGVSGTNAHVIIAEPPEPEPLPEPGPVGVLAAANSVPVLLSARTETALAAQARLLESAVDDSVPLTALASALATGRAHLPRRAALLAGDHEQLRGQLRAVAEGVAAPGATTGTASAGGVVFVFPGQGAQWEGMARGLLSVPVFAESIAECDAVLSEVAGFSASEVLEQRPDAPSLERVDVVQPVLFSVMVSLARLWGACGVSPSAVIGHSQGEIAAAVVAGVLSLEDGVRVVALRAKALRALAGKGGMVSLAAPGERARALIAPWEDRISVAAVNSPSSVVVSGDPEALAELVARCEDEGVRAKTLPVDYASHSRHVEEIRETILADLDGISARRAAIPLYSTLHGERRDMGPRYWYDNLRSQVRFDEAVSAQSPDGHATFVEMSPHPVLTAAVQEIAADAVAIGSLHRDTAEEHLIAELARAHVHGVAVDWRNVFPAAPPVALPNYPFEPQRYWLAPEVSDQLADSRYRVDWRPLATTPVDLEGGFLVHGSAPESLTSAVEKAGGVVPVASADREALAAALREVPGEVAGVLSVHTGAANALALHQSLGEAGVRAPLWLVTSRAVALGESEPVDPEQAMVWGLGRVMGLETPERWGGLVDLPAEPAPGDGEAFVACLGADGHEDQVAIRDHARYGRRLVRAPLGTRESSWEPAGTALVTGGTGALGGHVARHLARCGVEDLVLVSRRGVDAPAAAELEAELVALGPKTTITACDVADREQLSKLLEELRGQGRPVRTVVHTAGVPESRPLHEIGELESVCAAKVTGARLLDELCPDAETFVLFSSGAGVWGSANLGAYSAANAYLDALAHRRRAEGRAATSVAWGAWAGEGMATGDLEGLTRRGLRPMAPDRAIRALHQALDNGDTCVSIADVDWEAFAVGFTAARPRPLLDELVTPAVGAVPAVQAAPAREMTSQELLEFTHSHVAAILGHSSPDAVGQDQPFTELGFDSLTAVGLRNQLQQATGLALPATLVFEHPTVRRLADHIGQQLDSGTPAREASSALRDGYRQAGVSGRVRSYLDLLAGLSDFREHFDGSDGFSLDLVDMADGPGEVTVICCAGTAAISGPHEFTRLAGALRGIAPVRAVPQPGYEEGEPLPSSMAAVAAVQADAVIRTQGDKPFVVAGHSAGALMAYALATELLDRGHPPRGVVLIDVYPPGHQDAMNAWLEELTATLFDRETVRMDDTRLTALGAYDRLTGQWRPRETGLPTLLVSAGEPMGPWPDDSWKPTWPFEHDTVAVPGDHFTMVQEHADAIARHIDAWLGGGNS.

The 415-residue stretch at 38–452 (GEPIAIVGMA…GTNAHVIVEE (415 aa)) folds into the Ketosynthase family 3 (KS3) 1 domain. Module regions lie at residues 41 to 1464 (IAIV…DHYL) and 1492 to 2891 (IAIV…DHIG). Catalysis depends on C199, which acts as the Acyl-thioester intermediate; for beta-ketoacyl synthase 1 activity. Catalysis depends on for beta-ketoacyl synthase 1 activity residues H334 and H374. The segment at 557-874 (VFPGQGAQWQ…LGEAYAQGVE (318 aa)) is acyltransferase 1. The Acyl-ester intermediate; for acyltransferase 1 activity role is filled by S643. The tract at residues 1117–1294 (GTVLVTGGTG…VTSIAWGLWA (178 aa)) is beta-ketoacyl reductase 1. NADP(+) is bound by residues 1125 to 1128 (TGGI), 1148 to 1151 (GRRG), 1177 to 1178 (DV), K1229, and 1249 to 1250 (FS). The active-site Acyl-ester intermediate; for beta-ketoacyl reductase 1 activity is the Y1264. Positions 1392–1467 (EHLAHLIRAE…RLADHYLERL (76 aa)) constitute a Carrier 1 domain. S1427 is subject to O-(pantetheine 4'-phosphoryl)serine. The Ketosynthase family 3 (KS3) 2 domain occupies 1489 to 1916 (DDPIAIVGMA…GTNAHVIIAE (428 aa)). C1661 serves as the catalytic Acyl-thioester intermediate; for beta-ketoacyl synthase 2 activity. Catalysis depends on for beta-ketoacyl synthase 2 activity residues H1797 and H1837. The acyltransferase 2 stretch occupies residues 2022–2331 (VFVFPGQGAQ…LARAHVHGVA (310 aa)). Catalysis depends on S2112, which acts as the Acyl-ester intermediate; for acyltransferase 2 activity. The segment at 2557–2731 (GTALVTGGTG…ATSVAWGAWA (175 aa)) is beta-ketoacyl reductase 2. Residues 2565-2568 (TGAL), 2588-2591 (SRRG), 2617-2618 (DV), K2666, and 2686-2687 (FS) each bind NADP(+). Y2701 (acyl-ester intermediate; for beta-ketoacyl reductase 2 activity) is an active-site residue. The Carrier 2 domain maps to 2819-2894 (QELLEFTHSH…RLADHIGQQL (76 aa)). S2854 is subject to O-(pantetheine 4'-phosphoryl)serine. Residues 2960–3166 (ICCAGTAAIS…DAIARHIDAW (207 aa)) are thioesterase. T2965 provides a ligand contact to substrate. S3031 acts as the Nucleophile; for thioesterase activity in catalysis. Residues A3032 and D3058 each contribute to the substrate site. H3148 functions as the Proton acceptor; for thioesterase activity in the catalytic mechanism.

As to quaternary structure, homodimer. Erythronolide synthase is composed of EryAI, EryAII and EryAIII multimodular (2 modules) polypeptides each coding for a functional synthase subunit which participates in 2 of the six FAS-like elongation steps required for formation of the polyketide. Module 1, 2, 3, 4, 5, and 6 participating in biosynthesis steps 1, 2, 3, 4, 5, and 6, respectively. Pantetheine 4'-phosphate serves as cofactor.

It carries out the reaction 6 (S)-methylmalonyl-CoA + propanoyl-CoA + 6 NADPH + 12 H(+) = 6-deoxyerythronolide B + 6 CO2 + 6 NADP(+) + 7 CoA + H2O. It functions in the pathway antibiotic biosynthesis; erythromycin biosynthesis. With respect to regulation, inhibited by diphenyl phosphonates derivatives such as diphenyl allylphosphonate. Involved in the biosynthesis of antibiotic erythromycin via the biosynthesis of its aglycone precursor, 6-deoxyerythronolide B (6-dEB). The sequence is that of Erythronolide synthase EryA3 from Saccharopolyspora erythraea (Streptomyces erythraeus).